Consider the following 105-residue polypeptide: MYALIEYKGKQYKVERGSSIVVDNISEVAPGGCIDVREVLMIGGEGLTRIGSPYLEGVGVRAVVGECFRSRKITVYKYKSKKDYHRTIGHRQWYTRLTVSDILGV.

Belongs to the bacterial ribosomal protein bL21 family. In terms of assembly, part of the 50S ribosomal subunit. Contacts protein L20.

This protein binds to 23S rRNA in the presence of protein L20. This Treponema pallidum (strain Nichols) protein is Large ribosomal subunit protein bL21.